The primary structure comprises 102 residues: Small ribosomal subunit protein uS10 (102 aa).

The protein belongs to the universal ribosomal protein uS10 family. Part of the 30S ribosomal subunit.

Its function is as follows. Involved in the binding of tRNA to the ribosomes. In Brevibacillus brevis (strain 47 / JCM 6285 / NBRC 100599), this protein is Small ribosomal subunit protein uS10.